The sequence spans 889 residues: Inter-alpha-trypsin inhibitor heavy chain H3 (889 aa).

The N-terminal stretch at 1–21 (MRTMWWPCLVLALLSGLETSG) is a signal peptide. Positions 22–33 (FPRSPLQLLGKR) are excised as a propeptide. In terms of domain architecture, VIT spans 29-158 (LLGKRSLPEG…KVTFELTYEE (130 aa)). An N-linked (GlcNAc...) asparagine glycan is attached at N91. The VWFA domain maps to 284-467 (NIVFVIDVSG…LQLQGFYEEV (184 aa)). N580 is a glycosylation site (N-linked (GlcNAc...) asparagine). An Aspartate 1-(chondroitin 4-sulfate)-ester modification is found at D649. Residues 650–889 (PHFIIQIPGK…HTDYIVPSLF (240 aa)) constitute a propeptide that is removed on maturation.

Belongs to the ITIH family. In terms of assembly, I-alpha-I plasma protease inhibitors are assembled from one or two heavy chains (HC) and one light chain, bikunin. Pre-alpha-inhibitor (P-alpha-I) is composed of ITIH3/HC3 and bikunin. In terms of processing, heavy chains are linked to bikunin via chondroitin 4-sulfate esterified to the alpha-carboxyl of the C-terminal aspartate after propeptide cleavage. Expressed in both liver and brain.

The protein localises to the secreted. Its function is as follows. May act as a carrier of hyaluronan in serum or as a binding protein between hyaluronan and other matrix protein, including those on cell surfaces in tissues to regulate the localization, synthesis and degradation of hyaluronan which are essential to cells undergoing biological processes. The chain is Inter-alpha-trypsin inhibitor heavy chain H3 (Itih3) from Mus musculus (Mouse).